Here is a 75-residue protein sequence, read N- to C-terminus: Sec-independent protein translocase protein TatA (75 aa).

A helical transmembrane segment spans residues Met-1–Gly-21. The segment at Lys-40–Arg-75 is disordered.

Belongs to the TatA/E family. The Tat system comprises two distinct complexes: a TatABC complex, containing multiple copies of TatA, TatB and TatC subunits, and a separate TatA complex, containing only TatA subunits. Substrates initially bind to the TatABC complex, which probably triggers association of the separate TatA complex to form the active translocon.

It localises to the cell inner membrane. Part of the twin-arginine translocation (Tat) system that transports large folded proteins containing a characteristic twin-arginine motif in their signal peptide across membranes. TatA could form the protein-conducting channel of the Tat system. The chain is Sec-independent protein translocase protein TatA from Stenotrophomonas maltophilia (strain R551-3).